A 331-amino-acid polypeptide reads, in one-letter code: tRNA N6-adenosine threonylcarbamoyltransferase (331 aa).

H107 and H111 together coordinate Fe cation. Substrate is bound by residues 129–133 (LVSGG), D162, G175, and N269. D297 provides a ligand contact to Fe cation.

Belongs to the KAE1 / TsaD family. Fe(2+) is required as a cofactor.

It localises to the cytoplasm. The enzyme catalyses L-threonylcarbamoyladenylate + adenosine(37) in tRNA = N(6)-L-threonylcarbamoyladenosine(37) in tRNA + AMP + H(+). Required for the formation of a threonylcarbamoyl group on adenosine at position 37 (t(6)A37) in tRNAs that read codons beginning with adenine. Is involved in the transfer of the threonylcarbamoyl moiety of threonylcarbamoyl-AMP (TC-AMP) to the N6 group of A37, together with TsaE and TsaB. TsaD likely plays a direct catalytic role in this reaction. This chain is tRNA N6-adenosine threonylcarbamoyltransferase, found in Wolinella succinogenes (strain ATCC 29543 / DSM 1740 / CCUG 13145 / JCM 31913 / LMG 7466 / NCTC 11488 / FDC 602W) (Vibrio succinogenes).